A 3430-amino-acid chain; its full sequence is Genome polyprotein (3430 aa).

Residues 2–15 (SKKPGGPGKNRAVN) are interaction with host EXOC1. Residues 2–105 (SKKPGGPGKN…NRRSTKQKKR (104 aa)) are Cytoplasmic-facing. The interval 37–72 (LIDGKGPIRFVLALLAFFRFTAIAPTRAVLDRWRGV) is hydrophobic; homodimerization of capsid protein C. Positions 106–123 (GGTAGFTILLGLIACAGA) are cleaved as a propeptide — ER anchor for the capsid protein C, removed in mature form by serine protease NS3. A helical membrane pass occupies residues 106 to 126 (GGTAGFTILLGLIACAGAVTL). The Extracellular portion of the chain corresponds to 127–248 (SNFQGKVMMT…KATRYLVKTE (122 aa)). Residue Asn138 is glycosylated (N-linked (GlcNAc...) asparagine; by host). Residues 249-269 (SWILRNPGYALVAAVIGWMLG) traverse the membrane as a helical segment. The Cytoplasmic portion of the chain corresponds to 270-275 (SNTMQR). A helical transmembrane segment spans residues 276 to 290 (VVFAILLLLVAPAYS). The Extracellular portion of the chain corresponds to 291–739 (FNCLGMSNRD…QVFGGAFRSL (449 aa)). 6 disulfides stabilise this stretch: Cys293–Cys320, Cys350–Cys406, Cys364–Cys395, Cys382–Cys411, Cys476–Cys574, and Cys591–Cys622. A fusion peptide region spans residues 388–401 (DRGWGNGCGLFGKG). Residues 740–760 (FGGMSWITQGLLGALLLWMGI) traverse the membrane as a helical segment. Over 761 to 766 (NARDRS) the chain is Cytoplasmic. The helical transmembrane segment at 767–787 (IAMTFLAVGGVLLFLSVNVHA) threads the bilayer. The Extracellular portion of the chain corresponds to 788–1212 (DTGCAIDIGR…AFAEANSGGD (425 aa)). 2 cysteine pairs are disulfide-bonded: Cys791–Cys802 and Cys842–Cys930. N-linked (GlcNAc...) asparagine; by host glycans are attached at residues Asn917, Asn962, and Asn994. 4 cysteine pairs are disulfide-bonded: Cys966–Cys1010, Cys1067–Cys1116, Cys1078–Cys1099, and Cys1100–Cys1103. A helical membrane pass occupies residues 1213–1233 (VVHLALMATFKIQPVFLVASF). Residues 1234 to 1243 (LKARWTNQES) are Cytoplasmic-facing. A helical transmembrane segment spans residues 1244–1264 (ILLMLAAAFFQMAYYDAKNVL). At 1265 to 1278 (SWEVPDVLNSLSVA) the chain is on the lumenal side. The chain crosses the membrane as a helical span at residues 1279-1299 (WMILRAISFTNTSNVVVPLLA). The Cytoplasmic portion of the chain corresponds to 1300–1307 (LLTPGLKC). Residues 1308–1328 (LNLDVYRILLLMVGVGSLIKE) traverse the membrane as a helical segment. At 1329 to 1340 (KRSSAAKKKGAC) the chain is on the lumenal side. The chain crosses the membrane as a helical span at residues 1341–1361 (LICLALASTGVFNPMILAAGL). The Cytoplasmic portion of the chain corresponds to 1362–1371 (MACDPNRKRG). A helical membrane pass occupies residues 1372–1392 (WPATEVMTAVGLMFAIVGGLA). Over 1393–1395 (ELD) the chain is Lumenal. The helical transmembrane segment at 1396–1416 (IDSMAIPMTIAGLMFAAFVIS) threads the bilayer. The Cytoplasmic segment spans residues 1417–1473 (GKSTDMWIERTADITWESDAEITGSSERVDVRLDDDGNFQLMNDPGAPWKIWMLRMA). Positions 1424–1463 (IERTADITWESDAEITGSSERVDVRLDDDGNFQLMNDPGA) are interacts with and activates NS3 protease. An intramembrane region (helical) is located at residues 1474-1494 (CLAISAYTPWAILPSVIGFWI). The Cytoplasmic segment spans residues 1495-2170 (TLQYTKRGGV…RMALEELPDA (676 aa)). The 178-residue stretch at 1502–1679 (GGVLWDTPSP…ERMEEPAPAG (178 aa)) folds into the Peptidase S7 domain. Catalysis depends on charge relay system; for serine protease NS3 activity residues His1552, Asp1576, and Ser1636. In terms of domain architecture, Helicase ATP-binding spans 1682–1838 (PEMLRKKQIT…ESNAPISDMQ (157 aa)). The tract at residues 1686–1689 (RKKQ) is important for RNA-binding. 1695–1702 (LHPGAGKT) serves as a coordination point for ATP. The DEAH box motif lies at 1786-1789 (DEAH). One can recognise a Helicase C-terminal domain in the interval 1849-2014 (GYEWITEYVG…GLVAQLYQPE (166 aa)). Lys1890 bears the N6-acetyllysine; by host mark. Positions 2165–2169 (EELPD) are regulates the ATPase activity of NS3 helicase. Residues 2171–2191 (LQTIVLIALLSVMSLGVFFLL) form a helical membrane-spanning segment. Residues 2192–2196 (MQRKG) lie on the Lumenal side of the membrane. The segment at residues 2197 to 2217 (IGKIGLGGVILGAATFFCWMA) is an intramembrane region (helical). Position 2218 (Glu2218) is a topological domain, lumenal. A helical transmembrane segment spans residues 2219-2239 (VPGTKIAGMLLLSLLLMIVLI). Residues 2240-2254 (PEPEKQRSQTDNQLA) are Cytoplasmic-facing. Residues 2255–2275 (VFLICVLTLVGAVAANEMGWL) traverse the membrane as a helical segment. Over 2276-2309 (DKTKNDIGSLLGHRPEARETTLGVESFLLDLRPA) the chain is Lumenal. An intramembrane region (helical) is located at residues 2310-2330 (TAWSLYAVTTAVLTPLLKHLI). Residues 2331–2377 (TSDYINTSLTSINVQASALFTLARGFPFVDVGVSALLLAVGCWGQVT) lie on the Lumenal side of the membrane. The chain crosses the membrane as a helical span at residues 2378–2398 (LTVTVTAAALLFCHYAYMVPG). Residues 2399 to 2441 (WQAEAMRSAQRRTAAGIMKNVVVDGIVATDVPELERTTPVMQK) lie on the Cytoplasmic side of the membrane. The helical transmembrane segment at 2442-2462 (KVGQIILILVSMAAVVVNPSV) threads the bilayer. The Lumenal portion of the chain corresponds to 2463-2467 (RTVRE). The helical transmembrane segment at 2468-2488 (AGILTTAAAVTLWENGASSVW) threads the bilayer. Topologically, residues 2489–3430 (NATTAIGLCH…DTIVVEDTVL (942 aa)) are cytoplasmic. Residues 2526 to 2791 (GGAKGRTLGE…DVNLGSGTRA (266 aa)) enclose the mRNA cap 0-1 NS5-type MT domain. Ser2581 is a binding site for S-adenosyl-L-methionine. Ser2581 bears the Phosphoserine mark. Residue Lys2586 is the For 2'-O-MTase activity of the active site. The S-adenosyl-L-methionine site is built by Gly2611, Trp2612, Thr2629, Lys2630, Asp2656, and Val2657. Asp2671 (for 2'-O-MTase activity) is an active-site residue. Position 2672 (Ile2672) interacts with S-adenosyl-L-methionine. Active-site for 2'-O-MTase activity residues include Lys2707 and Glu2743. Position 2745 (Tyr2745) interacts with S-adenosyl-L-methionine. A Nuclear localization signal motif is present at residues 2914–2916 (RDK). Zn(2+)-binding residues include Glu2965, His2969, Cys2974, and Cys2977. The RdRp catalytic domain occupies 3055-3207 (GKVYADDTAG…KPLDDRFATS (153 aa)). Positions 3242, 3258, and 3377 each coordinate Zn(2+). The short motif at 3428 to 3430 (TVL) is the PDZ-binding element.

In the N-terminal section; belongs to the class I-like SAM-binding methyltransferase superfamily. mRNA cap 0-1 NS5-type methyltransferase family. As to quaternary structure, homodimer. Interacts (via N-terminus) with host EXOC1 (via C-terminus); this interaction results in EXOC1 degradation through the proteasome degradation pathway. Interacts with host DDX56; this interaction plays an important role in genomic RNA encapsidation. Forms heterodimers with envelope protein E in the endoplasmic reticulum and Golgi. In terms of assembly, homodimer; in the endoplasmic reticulum and Golgi. As to quaternary structure, homodimer; Homohexamer when secreted. Interacts with envelope protein E. NS1 interacts with NS4B. Interacts with host complement protein CFH; this interaction leads to the degradation of C3. Interacts (via N-terminus) with serine protease NS3. In terms of assembly, forms a heterodimer with serine protease NS3. May form homooligomers. As to quaternary structure, forms a heterodimer with NS2B. Interacts with NS4B. Interacts with unphosphorylated RNA-directed RNA polymerase NS5; this interaction stimulates RNA-directed RNA polymerase NS5 guanylyltransferase activity. Interacts with Serine protease/Helicase NS3. Interacts with NS1. In terms of assembly, homodimer. Interacts with host STAT2; this interaction inhibits the phosphorylation of the latter, and, when all viral proteins are present (polyprotein), targets STAT2 for degradation. Interacts with host PAF1 complex. Specific enzymatic cleavages in vivo yield mature proteins. Cleavages in the lumen of endoplasmic reticulum are performed by host signal peptidase, whereas cleavages in the cytoplasmic side are performed by serine protease NS3. Signal cleavage at the 2K-4B site requires a prior NS3 protease-mediated cleavage at the 4A-2K site. In terms of processing, cleaved in post-Golgi vesicles by a host furin, releasing the mature small envelope protein M, and peptide pr. This cleavage is incomplete as up to 30% of viral particles still carry uncleaved prM. Post-translationally, not N-glycosylated. N-glycosylated. The excreted form is glycosylated and this is required for efficient secretion of the protein from infected cells. In terms of processing, acetylated by host KAT5. Acetylation modulates NS3 RNA-binding and unwinding activities and plays an important positive role for viral replication. Post-translationally, phosphorylated on serines residues. This phosphorylation may trigger NS5 nuclear localization.

The protein resides in the virion. Its subcellular location is the host nucleus. The protein localises to the host cytoplasm. It localises to the host perinuclear region. It is found in the secreted. The protein resides in the virion membrane. Its subcellular location is the host endoplasmic reticulum membrane. The catalysed reaction is Selective hydrolysis of -Xaa-Xaa-|-Yaa- bonds in which each of the Xaa can be either Arg or Lys and Yaa can be either Ser or Ala.. The enzyme catalyses RNA(n) + a ribonucleoside 5'-triphosphate = RNA(n+1) + diphosphate. It catalyses the reaction a ribonucleoside 5'-triphosphate + H2O = a ribonucleoside 5'-diphosphate + phosphate + H(+). It carries out the reaction ATP + H2O = ADP + phosphate + H(+). The catalysed reaction is a 5'-end (5'-triphosphoguanosine)-ribonucleoside in mRNA + S-adenosyl-L-methionine = a 5'-end (N(7)-methyl 5'-triphosphoguanosine)-ribonucleoside in mRNA + S-adenosyl-L-homocysteine. The enzyme catalyses a 5'-end (N(7)-methyl 5'-triphosphoguanosine)-ribonucleoside in mRNA + S-adenosyl-L-methionine = a 5'-end (N(7)-methyl 5'-triphosphoguanosine)-(2'-O-methyl-ribonucleoside) in mRNA + S-adenosyl-L-homocysteine + H(+). Its function is as follows. Plays a role in virus budding by binding to the cell membrane and gathering the viral RNA into a nucleocapsid that forms the core of a mature virus particle. During virus entry, may induce genome penetration into the host cytoplasm after hemifusion induced by the surface proteins. Can migrate to the cell nucleus where it modulates host functions. Overcomes the anti-viral effects of host EXOC1 by sequestering and degrading the latter through the proteasome degradation pathway. Inhibits RNA silencing by interfering with host Dicer. Functionally, prevents premature fusion activity of envelope proteins in trans-Golgi by binding to envelope protein E at pH6.0. After virion release in extracellular space, gets dissociated from E dimers. In terms of biological role, acts as a chaperone for envelope protein E during intracellular virion assembly by masking and inactivating envelope protein E fusion peptide. prM is the only viral peptide matured by host furin in the trans-Golgi network probably to avoid catastrophic activation of the viral fusion activity in acidic Golgi compartment prior to virion release. prM-E cleavage is inefficient, and many virions are only partially matured. These uncleaved prM would play a role in immune evasion. Its function is as follows. May play a role in virus budding. Exerts cytotoxic effects by activating a mitochondrial apoptotic pathway through M ectodomain. May display a viroporin activity. Binds to host cell surface receptor and mediates fusion between viral and cellular membranes. Envelope protein is synthesized in the endoplasmic reticulum in the form of heterodimer with protein prM. They play a role in virion budding in the ER, and the newly formed immature particle is covered with 60 spikes composed of heterodimer between precursor prM and envelope protein E. The virion is transported to the Golgi apparatus where the low pH causes dissociation of PrM-E heterodimers and formation of E homodimers. prM-E cleavage is inefficient, and many virions are only partially matured. These uncleaved prM would play a role in immune evasion. Functionally, involved in immune evasion, pathogenesis and viral replication. Once cleaved off the polyprotein, is targeted to three destinations: the viral replication cycle, the plasma membrane and the extracellular compartment. Essential for viral replication. Required for formation of the replication complex and recruitment of other non-structural proteins to the ER-derived membrane structures. Excreted as a hexameric lipoparticle that plays a role against host immune response. Antagonizing the complement function. Binds to the host macrophages and dendritic cells. Inhibits signal transduction originating from Toll-like receptor 3 (TLR3). In terms of biological role, component of the viral RNA replication complex that functions in virion assembly and antagonizes the host alpha/beta interferon antiviral response. Its function is as follows. Required cofactor for the serine protease function of NS3. May have membrane-destabilizing activity and form viroporins. Displays three enzymatic activities: serine protease, NTPase and RNA helicase. NS3 serine protease, in association with NS2B, performs its autocleavage and cleaves the polyprotein at dibasic sites in the cytoplasm: C-prM, NS2A-NS2B, NS2B-NS3, NS3-NS4A, NS4A-2K and NS4B-NS5. NS3 RNA helicase binds RNA and unwinds dsRNA in the 3' to 5' direction. NS3 supports the separation of RNA daughter and template strands during viral replication. The helicase part is involved in the inhibition of phosphorylation of host STAT1, and thereby inhibition of host type-I IFN signaling. In addition, NS3 assists the initiation of replication by unwinding the RNA secondary structure in the 3' non-translated region (NTR). Inhibits STAT2 translocation in the nucleus after IFN-alpha treatment. Functionally, regulates the ATPase activity of the NS3 helicase activity. NS4A allows NS3 helicase to conserve energy during unwinding. In terms of biological role, functions as a signal peptide for NS4B and is required for the interferon antagonism activity of the latter. Its function is as follows. Induces the formation of ER-derived membrane vesicles where the viral replication takes place. Inhibits interferon (IFN)-induced host STAT1 phosphorylation and nuclear translocation, thereby preventing the establishment of cellular antiviral state by blocking the IFN-alpha/beta pathway. Inhibits STAT2 translocation in the nucleus after IFN-alpha treatment. Replicates the viral (+) and (-) RNA genome, and performs the capping of genomes in the cytoplasm. NS5 methylates viral RNA cap at guanine N-7 and ribose 2'-O positions. Besides its role in RNA genome replication, also prevents the establishment of cellular antiviral state by blocking the interferon-alpha/beta (IFN-alpha/beta) signaling pathway. Inhibits host TYK2 and STAT2 phosphorylation, thereby preventing activation of JAK-STAT signaling pathway. This Aedes (Tropical bont tick) protein is Genome polyprotein.